Consider the following 520-residue polypeptide: Cytochrome P450 4F2 (520 aa).

Positions Met1 to Leu4 are excised as a propeptide. Positions 328 and 468 each coordinate heme.

It belongs to the cytochrome P450 family. Heme is required as a cofactor. Liver. Also present in kidney: specifically expressed in the S2 and S3 segments of proximal tubules in cortex and outer medulla.

It localises to the microsome membrane. The protein localises to the endoplasmic reticulum membrane. It catalyses the reaction an organic molecule + reduced [NADPH--hemoprotein reductase] + O2 = an alcohol + oxidized [NADPH--hemoprotein reductase] + H2O + H(+). It carries out the reaction (5Z,8Z,11Z,14Z)-eicosatetraenoate + reduced [NADPH--hemoprotein reductase] + O2 = 20-hydroxy-(5Z,8Z,11Z,14Z)-eicosatetraenoate + oxidized [NADPH--hemoprotein reductase] + H2O + H(+). The enzyme catalyses (5Z,8Z,11Z)-eicosatrienoate + reduced [NADPH--hemoprotein reductase] + O2 = 20-hydroxy-(5Z,8Z,11Z)-eicosatrienoate + oxidized [NADPH--hemoprotein reductase] + H2O + H(+). The catalysed reaction is (5Z,8Z,11Z,14Z,17Z)-eicosapentaenoate + reduced [NADPH--hemoprotein reductase] + O2 = 20-hydroxy-(5Z,8Z,11Z,14Z,17Z)-eicosapentaenoate + oxidized [NADPH--hemoprotein reductase] + H2O + H(+). It catalyses the reaction (4Z,7Z,10Z,13Z,16Z,19Z)-docosahexaenoate + reduced [NADPH--hemoprotein reductase] + O2 = 22-hydroxy-(4Z,7Z,10Z,13Z,16Z,19Z)-docosahexaenoate + oxidized [NADPH--hemoprotein reductase] + H2O + H(+). It carries out the reaction 8,9-epoxy-(5Z,11Z,14Z)-eicosatrienoate + reduced [NADPH--hemoprotein reductase] + O2 = 20-hydroxy-8,9-epoxy-(5Z,11Z,14Z)-eicosatrienoate + oxidized [NADPH--hemoprotein reductase] + H2O + H(+). The enzyme catalyses (9S,10R)-epoxy-octadecanoate + reduced [NADPH--hemoprotein reductase] + O2 = 18-hydroxy-(9S,10R)-epoxy-octadecanoate + oxidized [NADPH--hemoprotein reductase] + H2O + H(+). The catalysed reaction is (9R,10S)-epoxy-octadecanoate + reduced [NADPH--hemoprotein reductase] + O2 = 18-hydroxy-(9R,10S)-epoxy-octadecanoate + oxidized [NADPH--hemoprotein reductase] + H2O + H(+). It catalyses the reaction 12,13-epoxy-(9Z)-octadecenoate + reduced [NADPH--hemoprotein reductase] + O2 = 18-hydroxy-12,13-epoxy-(9Z)-octadecenoate + oxidized [NADPH--hemoprotein reductase] + H2O + H(+). It carries out the reaction 9,10-epoxy-(12Z)-octadecenoate + reduced [NADPH--hemoprotein reductase] + O2 = 18-hydroxy-9,10-epoxy-(12Z)-octadecenoate + oxidized [NADPH--hemoprotein reductase] + H2O + H(+). The enzyme catalyses 8-hydroxy-(5Z,9E,11Z,14Z)-eicosatetraenoate + reduced [NADPH--hemoprotein reductase] + O2 = 8,20-dihydroxy-(5Z,9E,11Z,14Z)-eicosatetraenoate + oxidized [NADPH--hemoprotein reductase] + H2O + H(+). The catalysed reaction is 12-hydroxy-(5Z,8Z,10E,14Z)-eicosatetraenoate + reduced [NADPH--hemoprotein reductase] + O2 = 12,20-dihydroxy-(5Z,8Z,10E,14Z)-eicosatetraenoate + oxidized [NADPH--hemoprotein reductase] + H2O + H(+). It catalyses the reaction 12-hydroxyoctadecanoate + reduced [NADPH--hemoprotein reductase] + O2 = 12,18-dihydroxyoctadecanoate + oxidized [NADPH--hemoprotein reductase] + H2O + H(+). It carries out the reaction docosanoate + reduced [NADPH--hemoprotein reductase] + O2 = 22-hydroxydocosanoate + oxidized [NADPH--hemoprotein reductase] + H2O + H(+). The enzyme catalyses 22-hydroxydocosanoate + reduced [NADPH--hemoprotein reductase] + O2 = 22-oxodocosanoate + oxidized [NADPH--hemoprotein reductase] + 2 H2O + H(+). The catalysed reaction is 22-oxodocosanoate + reduced [NADPH--hemoprotein reductase] + O2 = docosanedioate + oxidized [NADPH--hemoprotein reductase] + H2O + 2 H(+). It catalyses the reaction tetracosanoate + reduced [NADPH--hemoprotein reductase] + O2 = 24-hydroxytetracosanoate + oxidized [NADPH--hemoprotein reductase] + H2O + H(+). It carries out the reaction hexacosanoate + reduced [NADPH--hemoprotein reductase] + O2 = 26-hydroxyhexacosanoate + oxidized [NADPH--hemoprotein reductase] + H2O + H(+). The enzyme catalyses 26-hydroxyhexacosanoate + reduced [NADPH--hemoprotein reductase] + O2 = 26-oxohexacosanoate + oxidized [NADPH--hemoprotein reductase] + 2 H2O + H(+). The catalysed reaction is 26-oxohexacosanoate + reduced [NADPH--hemoprotein reductase] + O2 = hexacosanedioate + oxidized [NADPH--hemoprotein reductase] + H2O + 2 H(+). It catalyses the reaction 3-hydroxyoctadecanoate + reduced [NADPH--hemoprotein reductase] + O2 = 3,18-dihydroxyoctadecanoate + oxidized [NADPH--hemoprotein reductase] + H2O + H(+). It carries out the reaction 3-hydroxyhexadecanoate + reduced [NADPH--hemoprotein reductase] + O2 = 3,16-dihydroxyhexadecanoate + oxidized [NADPH--hemoprotein reductase] + H2O + H(+). The enzyme catalyses leukotriene B4 + reduced [NADPH--hemoprotein reductase] + O2 = 20-hydroxy-leukotriene B4 + oxidized [NADPH--hemoprotein reductase] + H2O + H(+). The catalysed reaction is 6-trans-leukotriene B4 + reduced [NADPH--hemoprotein reductase] + O2 = 20-hydroxy-6-trans-leukotriene B4 + oxidized [NADPH--hemoprotein reductase] + H2O + H(+). It catalyses the reaction lipoxin A4 + reduced [NADPH--hemoprotein reductase] + O2 = 20-hydroxy-lipoxin A4 + oxidized [NADPH--hemoprotein reductase] + H2O + H(+). It carries out the reaction menaquinone-4 + reduced [NADPH--hemoprotein reductase] + O2 = omega-hydroxymenaquinone-4 + oxidized [NADPH--hemoprotein reductase] + H2O + H(+). The enzyme catalyses phylloquinone + reduced [NADPH--hemoprotein reductase] + O2 = omega-hydroxyphylloquinone + oxidized [NADPH--hemoprotein reductase] + H2O + H(+). The catalysed reaction is (+)-alpha-tocopherol + reduced [NADPH--hemoprotein reductase] + O2 = 13-hydroxy-alpha-tocopherol + oxidized [NADPH--hemoprotein reductase] + H2O + H(+). It catalyses the reaction gamma-tocopherol + NADPH + O2 + H(+) = 13-hydroxy-gamma-tocopherol + NADP(+) + H2O. Its pathway is lipid metabolism; arachidonate metabolism. It participates in lipid metabolism; leukotriene B4 degradation. It functions in the pathway cofactor degradation; phylloquinone degradation. Its activity is regulated as follows. Inhibited by dietary sesamin. In terms of biological role, a cytochrome P450 monooxygenase involved in the metabolism of various endogenous substrates, including fatty acids, eicosanoids and vitamins. Mechanistically, uses molecular oxygen inserting one oxygen atom into a substrate, and reducing the second into a water molecule, with two electrons provided by NADPH via cytochrome P450 reductase (CPR; NADPH-ferrihemoprotein reductase). Catalyzes predominantly the oxidation of the terminal carbon (omega-oxidation) of long- and very long-chain fatty acids. Displays high omega-hydroxylase activity toward polyunsaturated fatty acids (PUFAs). Participates in the conversion of arachidonic acid to omega-hydroxyeicosatetraenoic acid (20-HETE), a signaling molecule acting both as vasoconstrictive and natriuretic with overall effect on arterial blood pressure. Plays a role in the oxidative inactivation of eicosanoids, including both pro-inflammatory and anti-inflammatory mediators such as leukotriene B4 (LTB4), lipoxin A4 (LXA4), and several HETEs. Catalyzes omega-hydroxylation of 3-hydroxy fatty acids. Converts monoepoxides of linoleic acid leukotoxin and isoleukotoxin to omega-hydroxylated metabolites. Contributes to the degradation of very long-chain fatty acids (VLCFAs) by catalyzing successive omega-oxidations and chain shortening. Plays an important role in vitamin metabolism by chain shortening. Catalyzes omega-hydroxylation of the phytyl chain of tocopherols (forms of vitamin E), with preference for gamma-tocopherols over alpha-tocopherols, thus promoting retention of alpha-tocopherols in tissues. Omega-hydroxylates and inactivates phylloquinone (vitamin K1), and menaquinone-4 (MK-4, a form of vitamin K2), both acting as cofactors in blood coagulation. The chain is Cytochrome P450 4F2 from Homo sapiens (Human).